We begin with the raw amino-acid sequence, 256 residues long: MENVITIKAFEDNYIWLIKDSQSQHCIIVDPGDAAPVLTILEDQKLIVDAILLTHHHYDHIGGVDALLSARDEKISIYSKKKLFDRCRLVNESDTLSFFDGKLSLQVMEVPGHTLDHVAFYNDELLFCGDTLFSGGCGRVFEGSFEQMFKAVSRLALLPENTKVYCAHEYTQNNLIFAHQIEPKNKALLNYIQQVSKKRQQGQPTIPSTIGLEKEINPFLRCQQQTVINKLQSHLGKELNDPLSCFSALRQYKDNF.

Positions 55, 57, 59, 60, 113, 130, and 168 each coordinate Zn(2+).

The protein belongs to the metallo-beta-lactamase superfamily. Glyoxalase II family. In terms of assembly, monomer. Zn(2+) is required as a cofactor.

The enzyme catalyses an S-(2-hydroxyacyl)glutathione + H2O = a 2-hydroxy carboxylate + glutathione + H(+). It functions in the pathway secondary metabolite metabolism; methylglyoxal degradation; (R)-lactate from methylglyoxal: step 2/2. Functionally, thiolesterase that catalyzes the hydrolysis of S-D-lactoyl-glutathione to form glutathione and D-lactic acid. In Psychromonas ingrahamii (strain DSM 17664 / CCUG 51855 / 37), this protein is Hydroxyacylglutathione hydrolase.